The primary structure comprises 484 residues: Cobyric acid synthase (484 aa).

The region spanning 248–435 (VLKVIVPVLP…LHGLFEGSQS (188 aa)) is the GATase cobBQ-type domain. Cys329 (nucleophile) is an active-site residue. The active site involves His427.

Belongs to the CobB/CobQ family. CobQ subfamily.

It participates in cofactor biosynthesis; adenosylcobalamin biosynthesis. Its function is as follows. Catalyzes amidations at positions B, D, E, and G on adenosylcobyrinic A,C-diamide. NH(2) groups are provided by glutamine, and one molecule of ATP is hydrogenolyzed for each amidation. In Pseudomonas putida (strain W619), this protein is Cobyric acid synthase.